Here is a 299-residue protein sequence, read N- to C-terminus: GTPase Era (299 aa).

Residues 5-172 form the Era-type G domain; that stretch reads KSGFVSIIGR…IDVLKTYLPE (168 aa). The tract at residues 13-20 is G1; the sequence is GRPNVGKS. 13-20 contacts GTP; sequence GRPNVGKS. The segment at 39–43 is G2; the sequence is QTTRN. Residues 60–63 form a G3 region; the sequence is DTPG. GTP contacts are provided by residues 60–64 and 122–125; these read DTPGI and NKID. Residues 122–125 form a G4 region; that stretch reads NKID. Residues 151 to 153 form a G5 region; sequence ISA. A KH type-2 domain is found at 203 to 280; it reads TSEEIPHAIG…YLELWVKVQK (78 aa).

It belongs to the TRAFAC class TrmE-Era-EngA-EngB-Septin-like GTPase superfamily. Era GTPase family. As to quaternary structure, monomer.

It is found in the cytoplasm. Its subcellular location is the cell membrane. Functionally, an essential GTPase that binds both GDP and GTP, with rapid nucleotide exchange. Plays a role in 16S rRNA processing and 30S ribosomal subunit biogenesis and possibly also in cell cycle regulation and energy metabolism. This chain is GTPase Era, found in Staphylococcus haemolyticus (strain JCSC1435).